Consider the following 204-residue polypeptide: Rho GDP-dissociation inhibitor 1 (204 aa).

The tract at residues methionine 1–glutamine 36 is disordered. Alanine 2 is subject to N-acetylalanine. Serine 34 bears the Phosphoserine mark. N6-acetyllysine is present on lysine 43. A Phosphoserine modification is found at serine 47. The interval asparagine 66–proline 83 is hydrophobic. Phosphoserine; by PKA is present on serine 101. An N6-acetyllysine modification is found at lysine 105. Residue serine 115 is modified to Phosphoserine; by PKC. Lysine 127 is subject to N6-acetyllysine. Residues lysine 138 and lysine 141 each participate in a glycyl lysine isopeptide (Lys-Gly) (interchain with G-Cter in SUMO1); alternate cross-link. Glycyl lysine isopeptide (Lys-Gly) (interchain with G-Cter in SUMO2); alternate cross-links involve residues lysine 138 and lysine 141. Lysine 141 carries the N6-acetyllysine; alternate modification. Lysine 141 is subject to N6-succinyllysine; alternate. Lysine 178 bears the N6-acetyllysine mark.

Belongs to the Rho GDI family. As to quaternary structure, monomer. Interacts with FER. Interacts with PLXNB3. Forms a heterodimer with RAC1. Interacts with RHOA, the affinity is increased by three orders of magnitude when RHOA is prenylated. Interacts with PSMD10; the interaction increases ARHGDIA association with RHOA, leading to ARHGDIA-mediated inactivation of RHOA and ROCK and prolonged AKT activation. Interacts with KANK2; the interaction is direct and may regulate the interaction of ARHGDIA with RHOA, RAC1 and CDC42. Interacts with RHOC. Interacts with CDC42. Interacts with NGFR (via death domain); NGFR binding decreases the affinity for RHOA. In terms of tissue distribution, brain, lung, thymus, spleen, small intestine, and kidney, and weakly in heart and liver.

The protein resides in the cytoplasm. Functionally, controls Rho proteins homeostasis. Regulates the GDP/GTP exchange reaction of the Rho proteins by inhibiting the dissociation of GDP from them, and the subsequent binding of GTP to them. Retains Rho proteins such as CDC42, RAC1 and RHOA in an inactive cytosolic pool, regulating their stability and protecting them from degradation. Actively involved in the recycling and distribution of activated Rho GTPases in the cell, mediates extraction from membranes of both inactive and activated molecules due its exceptionally high affinity for prenylated forms. Through the modulation of Rho proteins, may play a role in cell motility regulation. In glioma cells, inhibits cell migration and invasion by mediating the signals of SEMA5A and PLXNB3 that lead to inactivation of RAC1. The protein is Rho GDP-dissociation inhibitor 1 (ARHGDIA) of Bos taurus (Bovine).